A 165-amino-acid polypeptide reads, in one-letter code: Endoribonuclease YbeY (165 aa).

3 residues coordinate Zn(2+): His-126, His-130, and His-136.

The protein belongs to the endoribonuclease YbeY family. It depends on Zn(2+) as a cofactor.

Its subcellular location is the cytoplasm. In terms of biological role, single strand-specific metallo-endoribonuclease involved in late-stage 70S ribosome quality control and in maturation of the 3' terminus of the 16S rRNA. This is Endoribonuclease YbeY from Ruegeria pomeroyi (strain ATCC 700808 / DSM 15171 / DSS-3) (Silicibacter pomeroyi).